The chain runs to 347 residues: Selenide, water dikinase (347 aa).

Residue C17 is part of the active site. Residues K20 and 48 to 50 (TRD) contribute to the ATP site. Position 51 (D51) interacts with Mg(2+). Residues D68, D91, and 139-141 (GHS) contribute to the ATP site. D91 serves as a coordination point for Mg(2+). Residue D227 coordinates Mg(2+).

This sequence belongs to the selenophosphate synthase 1 family. Class I subfamily. Homodimer. The cofactor is Mg(2+).

It catalyses the reaction hydrogenselenide + ATP + H2O = selenophosphate + AMP + phosphate + 2 H(+). Functionally, synthesizes selenophosphate from selenide and ATP. The polypeptide is Selenide, water dikinase (Enterobacter sp. (strain 638)).